Here is a 137-residue protein sequence, read N- to C-terminus: Pro-corazonin (137 aa).

Residues 1–20 form the signal peptide; the sequence is MKHVFSTSLIVSLFVIFTDA. The residue at position 21 (Gln-21) is a Pyrrolidone carboxylic acid. Asn-31 carries the asparagine amide modification. Positions 68–137 are excised as a propeptide; it reads FLKSPCDVRL…RLLNDGMHRL (70 aa).

The protein belongs to the corazonin family.

Its subcellular location is the secreted. Its function is as follows. Cardioactive peptide. Corazonin is probably involved in the physiological regulation of the heart beat. This is Pro-corazonin from Aedes aegypti (Yellowfever mosquito).